A 113-amino-acid polypeptide reads, in one-letter code: UPF0122 protein LCA_0713 (113 aa).

This sequence belongs to the UPF0122 family.

Might take part in the signal recognition particle (SRP) pathway. This is inferred from the conservation of its genetic proximity to ftsY/ffh. May be a regulatory protein. This chain is UPF0122 protein LCA_0713, found in Latilactobacillus sakei subsp. sakei (strain 23K) (Lactobacillus sakei subsp. sakei).